We begin with the raw amino-acid sequence, 450 residues long: MGKYFGTDGVRGEANVELTPELAFKLGRFGGYVLSQHETDRPRVFVARDTRISGEMLESALIAGLLSVGIEVYKLGVLATPGVSYLVRTEKASAGVMISASHNPALDNGIKFFGSDGFKLDDDRELEIEALLDAKEDTLPRPSAQGLGTLVDYPEGLRKYEKFMESTGIDLEGMKVALDTANGAATASARNIFLDLNADISVIGDQPDGLNINDGVGSTHPEQLQSLVRENGSDIGLAFDGDSDRLIAVDENGEIVDGDKIMFIIGKYLSDKGQLAQNTIVTTVMSNLGFHKALDREGIHKAITAVGDRYVVEEMRKSGYNLGGEQSGHVIIMDYNTTGDGQLTAIQLTKVMKETGKKLSELASEVTIYPQKLVNIRVENNMKDKAMEVPAIAEIIAKMEEEMDGNGRILVRPSGTEPLLRVMAEAPTNEAVDYYVDTIADVVRTEIGLD.

S101 acts as the Phosphoserine intermediate in catalysis. Mg(2+) is bound by residues S101, D240, D242, and D244. At S101 the chain carries Phosphoserine.

Belongs to the phosphohexose mutase family. Mg(2+) serves as cofactor. In terms of processing, activated by phosphorylation.

The enzyme catalyses alpha-D-glucosamine 1-phosphate = D-glucosamine 6-phosphate. Functionally, catalyzes the conversion of glucosamine-6-phosphate to glucosamine-1-phosphate. The sequence is that of Phosphoglucosamine mutase from Streptococcus agalactiae serotype Ia (strain ATCC 27591 / A909 / CDC SS700).